The sequence spans 852 residues: MTDTTGKLRAVLLTALMVGSVIGAGVAFTGGAAAANASDLNDYQRFNENTNYTYSTASEDGKTEGSVASGATIFQGEEDVTFRKLDNEKEVSPATLSRTGGSDEGVPLQMPIPEDQSTGSYDSNGPDNDEADFGVTVQSPSVTMLEVRNNADNDVTGGVLNTQQDESSIAVDYNYYAAEDLELTVEDEDGLDVTDEILAADQSGGAYEDGTGNNGPNTLRFDIDPNNVDAGDYTVSVEGVEDLDFGDATESASVTISSSNKASLNLAEDEVVQGANLKYTIENSPEGNYHAVTIDSSDFRDSSSGADAAKVMRSVGDTVDTGLVVDNDSTTEIVDDYENTSISDVDYAYAIVEIDDGNGVGSIETQYLDDSSADIDLYPASDTEDAPDYVNSNEELTNGSALDGVSTDDDTDFDVTQGDITLDNPTGAYVVGSEVDINGTANEGTDDVVLYARDNNDFELVTVDGEKSIEVDSDDTFEEEDITLSDGDKGGDDILGLPGTYRLGIIAKSDAVNSSGGVKDNIDTSDFNQGVSSTSSIRVTDTELTASFETYNGQVADDDNQIDVEGTAPGKDNVAAIIIGSRGKVKFQSISVDSDDTFDEEDIDISELRQGSASAHILSSGRDGKFGEDTANSISDLEDEVGNYTSGSPTGDQIRDRILSNTVDDTASDDLIVTQQFRLVDGLTTIEATEGGEAGGSLTVMGTTNRKADDNTITVELLQGDASIEINSTDEWNSDGQWSVDVPLSNVEPGNYTVEADDGDNTDRQNVEIVEELEEPDQTTVDQPENNQTMTTTMTETTTETTTEMTTTQENTTENGSEGTSDGESGGSIPGFGVGVALVAVLGAALLALRQN.

The signal sequence occupies residues 1–34 (MTDTTGKLRAVLLTALMVGSVIGAGVAFTGGAAA). Asparagine 36 is a glycosylation site (N-linked (GalNAc...) (glycosaminoglycan) asparagine). The disordered stretch occupies residues 84–131 (KLDNEKEVSPATLSRTGGSDEGVPLQMPIPEDQSTGSYDSNGPDNDEA). Polar residues predominate over residues 115-126 (DQSTGSYDSNGP). Asparagine 339, asparagine 398, asparagine 438, asparagine 513, asparagine 643, asparagine 727, asparagine 751, and asparagine 787 each carry an N-linked (Glc...) asparagine glycan. The interval 772–828 (ELEEPDQTTVDQPENNQTMTTTMTETTTETTTEMTTTQENTTENGSEGTSDGESGGS) is disordered. Positions 785-823 (ENNQTMTTTMTETTTETTTEMTTTQENTTENGSEGTSDG) are enriched in low complexity. O-linked (Gal...) threonine glycosylation is found at threonine 789, threonine 791, threonine 792, threonine 793, threonine 795, threonine 797, threonine 798, threonine 799, threonine 801, threonine 802, threonine 803, threonine 806, threonine 807, and threonine 808. Residue asparagine 811 is glycosylated (N-linked (Glc...) asparagine). O-linked (Gal...) threonine glycosylation is found at threonine 812 and threonine 813. Asparagine 815 carries an N-linked (Glc...) asparagine glycan. The helical transmembrane segment at 829 to 849 (IPGFGVGVALVAVLGAALLAL) threads the bilayer. The PGF sorting signal motif lies at 830 to 832 (PGF).

It belongs to the halobacterial S-layer protein family. In terms of processing, N-linked glycan at Asn-36 consists of a glycosaminoglycan chain, constructed by a repeating sulfated pentasaccharide block composed of GlcNAc, GalNAc, Gal, GalA, 3-O-methyl-GalA, and sulfate in the molar ratio of 1:1:1:1:1:2; the other N-linked glycans contain Glc, GlcA and IdoA. O-linked glycans consist of Glc-Gal disaccharides. Post-translationally, the C-terminus (residues 770-778) is lipidated with diphytanylglyceryl phosphate. In terms of processing, cleaved by the archaeosortase ArtA at the C-terminus, with removal of a short hydrophobic segment.

The protein resides in the secreted. It localises to the cell wall. It is found in the S-layer. The protein localises to the cell membrane. S-layer protein. The S-layer is a paracrystalline mono-layered assembly of proteins which coat the surface of the cell. The protein is Cell surface glycoprotein (csg) of Halobacterium salinarum (strain ATCC 29341 / DSM 671 / R1).